A 655-amino-acid chain; its full sequence is Bifunctional lysine-specific demethylase and histidyl-hydroxylase NO66 (655 aa).

Residues 1-16 (MEKVTNSAAAKPQGNN) are compositionally biased toward polar residues. Disordered stretches follow at residues 1-48 (MEKV…LSDM) and 67-122 (EDTD…QGAS). A compositionally biased stretch (low complexity) spans 76-86 (STSSKEAAAAK). The segment covering 87–96 (TADHERRLQA) has biased composition (basic and acidic residues). Ser-131 bears the Phosphoserine mark. Position 137 is a phosphothreonine (Thr-137). Ser-138 carries the phosphoserine modification. Residues 185-210 (KAPEEGNNNNDEKEMSTETSEPHKTD) form a disordered region. Residues 194-210 (NDEKEMSTETSEPHKTD) are compositionally biased toward basic and acidic residues. The 146-residue stretch at 307 to 452 (CSIRLLHASA…NLLETLMPMV (146 aa)) folds into the JmjC domain. Positions 353, 355, and 418 each coordinate Fe cation.

It belongs to the ROX family. NO66 subfamily. The cofactor is Fe(2+).

Its subcellular location is the nucleus. It carries out the reaction N(6),N(6)-dimethyl-L-lysyl(36)-[histone H3] + 2 2-oxoglutarate + 2 O2 = L-lysyl(36)-[histone H3] + 2 formaldehyde + 2 succinate + 2 CO2. Oxygenase that can act as both a histone lysine demethylase and a ribosomal histidine hydroxylase. Specifically demethylates 'Lys-4' (H3K4me) and 'Lys-36' (H3K36me) of histone H3, thereby playing a central role in histone code. This chain is Bifunctional lysine-specific demethylase and histidyl-hydroxylase NO66, found in Drosophila sechellia (Fruit fly).